The primary structure comprises 220 residues: MSFRDQPLGELALSIPRASALFRKYDMDYCCGGKQTLARAAARKELDVEAIEAELAQLAEQPIEKDWRTAPLAEIIDHIIVRYHDRHREQLPELILQATKVERVHADKPSVPKGLAKYLTMLHQELSSHMMKEEQILFPMIKQGMGSQAMGPISVMESEHDDAGELLEVIKHTTNNVTPPPEACTTWKAMYNGINEMIDDLMEHISLENNVLFPRALAGE.

This sequence belongs to the RIC family. YtfE subfamily. Homodimer.

Its subcellular location is the cytoplasm. Functionally, di-iron-containing protein involved in the repair of iron-sulfur clusters damaged by oxidative and nitrosative stress conditions. In Citrobacter koseri (strain ATCC BAA-895 / CDC 4225-83 / SGSC4696), this protein is Iron-sulfur cluster repair protein YtfE.